Reading from the N-terminus, the 447-residue chain is MLHRYLPMTEEDKKEMLQTIGVQTIDELFSDIPESVRFKGDLKIKEAKSEPELLKELSQMASKNANLKEYASFLGAGVYDHYAPVIVDHVISRSEFYTAYTPYQPEISQGELQAIFEFQTMICELTGMDVANSSMYDGGTALAEAAMLAAGHTRKKKILVSSAVHPESRAVLETYAKGQHLEVVEINHKDGVTDLDVLQSEVDDTVACVIVQYPNFFGQVEKLADIEKIVHQQKSLFIVSSNPLSLGALTPPGKFGADIVIGDAQPFGIPTQFGGPHCGYFATTKAFMRKIPGRLVGQTVDSDGKRGFVLTLQAREQHIRRDKATSNICSNQALNALAASVAMTALGKQGVKEMARQNISKAQYAKRQFEAKGFTVTFAGPFFNEFVVDCKRPVKEVNDALLQKNIIGGYDLGRDYKEHENHMLVAVTELRTKEEIDTLVNEMGAIQ.

The protein belongs to the GcvP family. N-terminal subunit subfamily. As to quaternary structure, the glycine cleavage system is composed of four proteins: P, T, L and H. In this organism, the P 'protein' is a heterodimer of two subunits.

The enzyme catalyses N(6)-[(R)-lipoyl]-L-lysyl-[glycine-cleavage complex H protein] + glycine + H(+) = N(6)-[(R)-S(8)-aminomethyldihydrolipoyl]-L-lysyl-[glycine-cleavage complex H protein] + CO2. Its function is as follows. The glycine cleavage system catalyzes the degradation of glycine. The P protein binds the alpha-amino group of glycine through its pyridoxal phosphate cofactor; CO(2) is released and the remaining methylamine moiety is then transferred to the lipoamide cofactor of the H protein. In Bacillus anthracis (strain A0248), this protein is Probable glycine dehydrogenase (decarboxylating) subunit 1.